The primary structure comprises 323 residues: uncharacterized protein (323 aa).

Tyr59 acts as the Proton donor in catalysis. 198-208 (SPLAQGLLGGK) contributes to the NADP(+) binding site.

The protein belongs to the aldo/keto reductase family. Aldo/keto reductase 2 subfamily.

This is an uncharacterized protein from Mycobacterium tuberculosis (strain CDC 1551 / Oshkosh).